We begin with the raw amino-acid sequence, 117 residues long: Immunoglobulin kappa variable 1-33 (117 aa).

An N-terminal signal peptide occupies residues 1–22 (MDMRVPAQLLGLLLLWLSGARC). Residues 23-45 (DIQMTQSPSSLSASVGDRVTITC) form a framework-1 region. In terms of domain architecture, Ig-like spans 24–117 (IQMTQSPSSL…YYCQQYDNLP (94 aa)). C45 and C110 form a disulfide bridge. The interval 46–56 (QASQDISNYLN) is complementarity-determining-1. The segment at 57–71 (WYQQKPGKAPKLLIY) is framework-2. The complementarity-determining-2 stretch occupies residues 72 to 78 (DASNLET). The segment at 79–110 (GVPSRFSGSGSGTDFTFTISSLQPEDIATYYC) is framework-3. The complementarity-determining-3 stretch occupies residues 111-117 (QQYDNLP).

In terms of assembly, immunoglobulins are composed of two identical heavy chains and two identical light chains; disulfide-linked.

The protein localises to the secreted. It is found in the cell membrane. Functionally, v region of the variable domain of immunoglobulin light chains that participates in the antigen recognition. Immunoglobulins, also known as antibodies, are membrane-bound or secreted glycoproteins produced by B lymphocytes. In the recognition phase of humoral immunity, the membrane-bound immunoglobulins serve as receptors which, upon binding of a specific antigen, trigger the clonal expansion and differentiation of B lymphocytes into immunoglobulins-secreting plasma cells. Secreted immunoglobulins mediate the effector phase of humoral immunity, which results in the elimination of bound antigens. The antigen binding site is formed by the variable domain of one heavy chain, together with that of its associated light chain. Thus, each immunoglobulin has two antigen binding sites with remarkable affinity for a particular antigen. The variable domains are assembled by a process called V-(D)-J rearrangement and can then be subjected to somatic hypermutations which, after exposure to antigen and selection, allow affinity maturation for a particular antigen. The chain is Immunoglobulin kappa variable 1-33 from Homo sapiens (Human).